The following is a 133-amino-acid chain: MVTLSDLESNASSSVTKNEVNTSSLVNGNGVLIITENVNKEHSVENQLASSKTEEQTLKISKKSNLNPAQKSSTFGLENTSPVIRPTSVFTKSTVLSTENNLVSFEVDFMNFFSALNFFLESLVYFVVNDFSS.

The disordered stretch occupies residues 44 to 79; that stretch reads VENQLASSKTEEQTLKISKKSNLNPAQKSSTFGLEN. Positions 63-79 are enriched in polar residues; sequence KSNLNPAQKSSTFGLEN.

Its subcellular location is the plastid. The protein resides in the chloroplast. This is an uncharacterized protein from Chlorella vulgaris (Green alga).